The sequence spans 1004 residues: Protein CHUP1, chloroplastic (1004 aa).

A required for chloroplast localization region spans residues 1–25; that stretch reads MFVRIGFVVAASIAAVTVKRLNVKP. Positions 22–63 are disordered; the sequence is NVKPSKPSKPSDNGEGGDKEQSVDPDYNLNDKNLQEEEEEEE. The stretch at 123–341 forms a coiled coil; it reads EMAYNDGELE…KQVEGLQMNR (219 aa). The leucine-zipper 1 stretch occupies residues 269–290; that stretch reads LEVQVMELKRKNRELQHEKREL. 4 disordered regions span residues 398–482, 504–536, 612–718, and 736–755; these read GSER…SMNK, FGQVDQESPGTPETPNLPRIRTQQQASSPGEGL, TATG…GNKV, and SKKEGAPSLISSGTGNSSAA. Ser-399 is subject to Phosphoserine. Polar residues predominate over residues 409-419; it reads ESNYSQPSSPG. Positions 427–439 are enriched in low complexity; that stretch reads SMDSSTSRFSSFS. 2 stretches are compositionally biased toward polar residues: residues 504 to 517 and 612 to 624; these read FGQVDQESPGTPET and TATGDQSNESNES. Residues 670-706 show a composition bias toward pro residues; it reads ARPPLPGGGPPPPPPPPGGGPPPPPGGGPPPPPPPPG. Residues 744-755 show a composition bias toward polar residues; that stretch reads LISSGTGNSSAA. The segment at 802–823 is leucine-zipper 2; the sequence is LLAFVSWLDEELSFLVDERAVL. Residues 979–1004 form a disordered region; it reads RSRAKTESGDNNNNNNNNSNEEESVN.

Expressed in cauline leaves, rosette leaves, stems and flowers, but not in roots.

It localises to the plastid. The protein resides in the chloroplast outer membrane. In terms of biological role, required for the positioning and movement of chloroplasts. Interacts with profilin and actin independent of its polymerization status. Regulates chloroplast localization by anchoring chloroplasts to the plasma membrane and forming a bridge to the actin cytoskeleton. The protein is Protein CHUP1, chloroplastic (CHUP1) of Arabidopsis thaliana (Mouse-ear cress).